The sequence spans 210 residues: Protein GrpE (210 aa).

Residues 1–12 show a composition bias toward basic and acidic residues; it reads MSDQAKDERAPS. Disordered stretches follow at residues 1–26 and 191–210; these read MSDQAKDERAPSEAEAAEANAERTEG and IAAEAPVEPGPVNEQAEKDA.

Belongs to the GrpE family. Homodimer.

The protein localises to the cytoplasm. Functionally, participates actively in the response to hyperosmotic and heat shock by preventing the aggregation of stress-denatured proteins, in association with DnaK and GrpE. It is the nucleotide exchange factor for DnaK and may function as a thermosensor. Unfolded proteins bind initially to DnaJ; upon interaction with the DnaJ-bound protein, DnaK hydrolyzes its bound ATP, resulting in the formation of a stable complex. GrpE releases ADP from DnaK; ATP binding to DnaK triggers the release of the substrate protein, thus completing the reaction cycle. Several rounds of ATP-dependent interactions between DnaJ, DnaK and GrpE are required for fully efficient folding. This Mesorhizobium japonicum (strain LMG 29417 / CECT 9101 / MAFF 303099) (Mesorhizobium loti (strain MAFF 303099)) protein is Protein GrpE.